We begin with the raw amino-acid sequence, 128 residues long: Large ribosomal subunit protein bL17 (128 aa).

It belongs to the bacterial ribosomal protein bL17 family. In terms of assembly, part of the 50S ribosomal subunit. Contacts protein L32.

The protein is Large ribosomal subunit protein bL17 of Hydrogenovibrio crunogenus (strain DSM 25203 / XCL-2) (Thiomicrospira crunogena).